Reading from the N-terminus, the 74-residue chain is Peptide BmKa2 (74 aa).

Positions 1 to 24 (MSSKTLLVLLLVGVLVSTFFTADA) are cleaved as a signal peptide.

Belongs to the non-disulfide-bridged peptide (NDBP) superfamily. Long chain multifunctional peptide (group 2) family. Expressed by the venom gland.

The protein resides in the secreted. Functionally, highly acidic peptide that may have antibacterial activity. The chain is Peptide BmKa2 from Olivierus martensii (Manchurian scorpion).